Here is a 301-residue protein sequence, read N- to C-terminus: Mycothiol acetyltransferase (301 aa).

N-acetyltransferase domains follow at residues 7-150 (VDWQ…PPVD) and 152-301 (VRFA…AVEG). Residue aspartate 39 coordinates 1D-myo-inositol 2-(L-cysteinylamino)-2-deoxy-alpha-D-glucopyranoside. Residues 80–82 (LVV) and 88–93 (RRGIGS) each bind acetyl-CoA. 1D-myo-inositol 2-(L-cysteinylamino)-2-deoxy-alpha-D-glucopyranoside is bound by residues glutamate 179, lysine 220, and glutamate 228. 232–234 (VGV) serves as a coordination point for acetyl-CoA. Tyrosine 271 provides a ligand contact to 1D-myo-inositol 2-(L-cysteinylamino)-2-deoxy-alpha-D-glucopyranoside. 276–281 (NTAAVK) provides a ligand contact to acetyl-CoA.

This sequence belongs to the acetyltransferase family. MshD subfamily. As to quaternary structure, monomer.

It carries out the reaction 1D-myo-inositol 2-(L-cysteinylamino)-2-deoxy-alpha-D-glucopyranoside + acetyl-CoA = mycothiol + CoA + H(+). Catalyzes the transfer of acetyl from acetyl-CoA to desacetylmycothiol (Cys-GlcN-Ins) to form mycothiol. The polypeptide is Mycothiol acetyltransferase (Mycolicibacterium vanbaalenii (strain DSM 7251 / JCM 13017 / BCRC 16820 / KCTC 9966 / NRRL B-24157 / PYR-1) (Mycobacterium vanbaalenii)).